The sequence spans 325 residues: Phosphate acyltransferase (325 aa).

It belongs to the PlsX family. As to quaternary structure, homodimer. Probably interacts with PlsY.

The protein localises to the cytoplasm. It carries out the reaction a fatty acyl-[ACP] + phosphate = an acyl phosphate + holo-[ACP]. The protein operates within lipid metabolism; phospholipid metabolism. In terms of biological role, catalyzes the reversible formation of acyl-phosphate (acyl-PO(4)) from acyl-[acyl-carrier-protein] (acyl-ACP). This enzyme utilizes acyl-ACP as fatty acyl donor, but not acyl-CoA. This Staphylococcus epidermidis (strain ATCC 35984 / DSM 28319 / BCRC 17069 / CCUG 31568 / BM 3577 / RP62A) protein is Phosphate acyltransferase.